Here is a 303-residue protein sequence, read N- to C-terminus: 4-diphosphocytidyl-2-C-methyl-D-erythritol kinase (303 aa).

Lys24 is a catalytic residue. Residue 111–121 (PIASGIGGGSA) coordinates ATP. Residue Asp153 is part of the active site.

Belongs to the GHMP kinase family. IspE subfamily.

It catalyses the reaction 4-CDP-2-C-methyl-D-erythritol + ATP = 4-CDP-2-C-methyl-D-erythritol 2-phosphate + ADP + H(+). The protein operates within isoprenoid biosynthesis; isopentenyl diphosphate biosynthesis via DXP pathway; isopentenyl diphosphate from 1-deoxy-D-xylulose 5-phosphate: step 3/6. Its function is as follows. Catalyzes the phosphorylation of the position 2 hydroxy group of 4-diphosphocytidyl-2C-methyl-D-erythritol. This Rhizobium johnstonii (strain DSM 114642 / LMG 32736 / 3841) (Rhizobium leguminosarum bv. viciae) protein is 4-diphosphocytidyl-2-C-methyl-D-erythritol kinase.